A 197-amino-acid polypeptide reads, in one-letter code: Nucleoid occlusion factor SlmA (197 aa).

Positions 7–67 (INRREHILQC…GLIEFIEDAI (61 aa)) constitute an HTH tetR-type domain. The segment at residues 30–49 (TTAKLAAEVGVSEAALYRHF) is a DNA-binding region (H-T-H motif).

It belongs to the nucleoid occlusion factor SlmA family. As to quaternary structure, homodimer. Interacts with FtsZ.

It is found in the cytoplasm. The protein resides in the nucleoid. Functionally, required for nucleoid occlusion (NO) phenomenon, which prevents Z-ring formation and cell division over the nucleoid. Acts as a DNA-associated cell division inhibitor that binds simultaneously chromosomal DNA and FtsZ, and disrupts the assembly of FtsZ polymers. SlmA-DNA-binding sequences (SBS) are dispersed on non-Ter regions of the chromosome, preventing FtsZ polymerization at these regions. This Shewanella denitrificans (strain OS217 / ATCC BAA-1090 / DSM 15013) protein is Nucleoid occlusion factor SlmA.